An 855-amino-acid polypeptide reads, in one-letter code: MICAL-like protein 1 (855 aa).

The Calponin-homology (CH) domain occupies 2 to 108; that stretch reads AGPRGALLAW…YVSQYYNHFT (107 aa). 3 disordered regions span residues 110–165, 226–253, and 269–659; these read SGQA…SSAC, GRSG…EDSD, and QASS…HGFP. The segment covering 124 to 135 has biased composition (low complexity); that stretch reads PAAPSPTSTSPA. Residues 163–226 form the LIM zinc-binding domain; that stretch reads SACAACGQRV…ERCTRLGLGG (64 aa). The segment covering 269–278 has biased composition (polar residues); that stretch reads QASSEVQPHT. A phosphoserine mark is found at Ser-293 and Ser-307. Residues 308-325 show a composition bias toward polar residues; the sequence is ESSALTPPTPRPRSSLQQ. Thr-313 and Thr-316 each carry phosphothreonine. A compositionally biased stretch (basic and acidic residues) spans 356–367; sequence LSERMTAPRKDP. Positions 423 to 425 match the NPF1 motif; sequence NPF. A compositionally biased stretch (acidic residues) spans 425-434; the sequence is FEEEEEEEEA. Positions 439–449 are enriched in pro residues; it reads VPSPAPAPPET. Residues Thr-461 and Thr-463 each carry the phosphothreonine modification. Ser-464, Ser-465, Ser-478, and Ser-480 each carry phosphoserine. The segment covering 499 to 514 has biased composition (low complexity); that stretch reads PSPALSVESLSSESSS. The segment covering 542–554 has biased composition (polar residues); the sequence is PGTSANSVTPSAH. Residues 555-570 show a composition bias toward low complexity; sequence SSLSSSGELGQPSGEQ. Ser-613 is subject to Phosphoserine. Residues 625–627 carry the NPF2 motif; sequence NPF. The tract at residues 644–855 is mediates the interaction with RAB13 and intramolecular interaction with the calponin-homology (CH) domain; it reads KGAKPVRPPA…AKSKAPTGKS (212 aa). One can recognise a bMERB domain in the interval 663–810; that stretch reads RKVQADQYIP…EEEEDKMLET (148 aa). Residues 679-703 are a coiled coil; sequence EMDSIERQLDALEHSGVLLEEKLRG. Phosphoserine occurs at positions 682 and 732. The segment at 692–855 is necessary and sufficient to associate with tubular recycling endosome membranes, mediate phosphatidic acid-binding and membrane tubulation; that stretch reads HSGVLLEEKL…AKSKAPTGKS (164 aa). A coiled-coil region spans residues 794-822; it reads LDEDRQREEEEDKMLETMIKKKDFQREAE. The segment covering 815–826 has biased composition (basic and acidic residues); that stretch reads KDFQREAESDSK. The tract at residues 815–855 is disordered; sequence KDFQREAESDSKKKGKFKTMKVLKLLGNKRDAKSKAPTGKS.

As to quaternary structure, homooligomer. Interacts (via NPF1 motif) with EHD1 (via EH domain); the interaction is direct and probably recruits EHD1 to membranes. Interacts with EHD3 (via EH domain). Interacts with RAB35 (GTP-bound form); the interaction is direct and probably recruits MICALL1 to membranes. Interacts with ACAP2; the interaction is indirect through RAB35. Interacts with RAB8A (GTP-bound form); regulates RAB8A association with recycling endosomes. Interacts with RAB13 (GTP-bound form). Interacts with ARF6 (GTP-bound form). Interacts with PACSIN2 (via the SH3 domain). Interacts with DPYSL2.

It is found in the recycling endosome membrane. The protein localises to the late endosome membrane. Its subcellular location is the cell projection. The protein resides in the cilium membrane. It localises to the cytoplasm. It is found in the cytoskeleton. The protein localises to the microtubule organizing center. Its subcellular location is the centrosome. The protein resides in the centriole. Lipid-binding protein with higher affinity for phosphatidic acid, a lipid enriched in recycling endosome membranes. On endosome membranes, acts as a downstream effector of Rab proteins recruiting cytosolic proteins to regulate membrane tubulation. Involved in a late step of receptor-mediated endocytosis regulating for instance endocytosed-EGF receptor trafficking. Alternatively, regulates slow endocytic recycling of endocytosed proteins back to the plasma membrane. Also involved in cargo protein delivery to the plasma membrane. Plays a role in ciliogenesis coordination, recruits EHD1 to primary cilium where it is anchored to the centriole through interaction with tubulins. May indirectly play a role in neurite outgrowth. In Rattus norvegicus (Rat), this protein is MICAL-like protein 1 (Micall1).